We begin with the raw amino-acid sequence, 156 residues long: Endoribonuclease YbeY (156 aa).

Residues H114, H118, and H124 each coordinate Zn(2+).

Belongs to the endoribonuclease YbeY family. Zn(2+) serves as cofactor.

Its subcellular location is the cytoplasm. Single strand-specific metallo-endoribonuclease involved in late-stage 70S ribosome quality control and in maturation of the 3' terminus of the 16S rRNA. This is Endoribonuclease YbeY from Sodalis glossinidius (strain morsitans).